We begin with the raw amino-acid sequence, 1372 residues long: Serine protease pic autotransporter (1372 aa).

The first 55 residues, 1–55, serve as a signal peptide directing secretion; that stretch reads MNKVYSLKYCPVTGGLIAVSELARRVIKKTCRRLTHILLAGIPAICLCYSQISQA. One can recognise a Peptidase S6 domain in the interval 56–301; it reads GIVRSDIAYQ…NVIPTDYLNQ (246 aa). Residues His127, Asp155, and Ser258 each act as charge relay system in the active site. One can recognise an Autotransporter domain in the interval 1106–1372; the sequence is DTNGDAGAWA…AVNANFRYMF (267 aa).

In terms of processing, cleaved to release the mature protein from the outer membrane.

Its subcellular location is the periplasm. It localises to the secreted. It is found in the cell surface. The protein localises to the cell outer membrane. Functionally, involved in intestinal colonization, displays in vitro mucinolytic activity, serum resistance, and hemagglutination. Important to penetrate the intestinal mucus layer. The sequence is that of Serine protease pic autotransporter (pic) from Escherichia coli O44:H18 (strain 042 / EAEC).